The primary structure comprises 273 residues: Ribosomal RNA small subunit methyltransferase A (273 aa).

Residues asparagine 18, leucine 20, glycine 45, glutamate 66, aspartate 91, and asparagine 113 each coordinate S-adenosyl-L-methionine.

The protein belongs to the class I-like SAM-binding methyltransferase superfamily. rRNA adenine N(6)-methyltransferase family. RsmA subfamily.

The protein localises to the cytoplasm. The enzyme catalyses adenosine(1518)/adenosine(1519) in 16S rRNA + 4 S-adenosyl-L-methionine = N(6)-dimethyladenosine(1518)/N(6)-dimethyladenosine(1519) in 16S rRNA + 4 S-adenosyl-L-homocysteine + 4 H(+). In terms of biological role, specifically dimethylates two adjacent adenosines (A1518 and A1519) in the loop of a conserved hairpin near the 3'-end of 16S rRNA in the 30S particle. May play a critical role in biogenesis of 30S subunits. The sequence is that of Ribosomal RNA small subunit methyltransferase A from Escherichia coli O139:H28 (strain E24377A / ETEC).